A 334-amino-acid polypeptide reads, in one-letter code: Aspartate carbamoyltransferase catalytic subunit (334 aa).

2 residues coordinate carbamoyl phosphate: arginine 71 and threonine 72. Position 99 (lysine 99) interacts with L-aspartate. Carbamoyl phosphate is bound by residues arginine 121, histidine 151, and glutamine 154. L-aspartate-binding residues include arginine 184 and arginine 239. Carbamoyl phosphate-binding residues include glycine 280 and proline 281.

The protein belongs to the aspartate/ornithine carbamoyltransferase superfamily. ATCase family. Heterododecamer (2C3:3R2) of six catalytic PyrB chains organized as two trimers (C3), and six regulatory PyrI chains organized as three dimers (R2).

The enzyme catalyses carbamoyl phosphate + L-aspartate = N-carbamoyl-L-aspartate + phosphate + H(+). The protein operates within pyrimidine metabolism; UMP biosynthesis via de novo pathway; (S)-dihydroorotate from bicarbonate: step 2/3. Functionally, catalyzes the condensation of carbamoyl phosphate and aspartate to form carbamoyl aspartate and inorganic phosphate, the committed step in the de novo pyrimidine nucleotide biosynthesis pathway. The protein is Aspartate carbamoyltransferase catalytic subunit of Pseudomonas syringae pv. tomato (strain ATCC BAA-871 / DC3000).